The sequence spans 425 residues: Multifunctional CCA protein (425 aa).

ATP is bound by residues G8 and R11. CTP is bound by residues G8 and R11. The Mg(2+) site is built by D21 and D23. ATP-binding residues include R91, R141, and R144. R91, R141, and R144 together coordinate CTP. Residues 230-331 form the HD domain; sequence TGVHLMMVLD…VRLLERCDAI (102 aa).

Belongs to the tRNA nucleotidyltransferase/poly(A) polymerase family. Bacterial CCA-adding enzyme type 1 subfamily. In terms of assembly, monomer. Can also form homodimers and oligomers. Requires Mg(2+) as cofactor. Ni(2+) serves as cofactor.

It carries out the reaction a tRNA precursor + 2 CTP + ATP = a tRNA with a 3' CCA end + 3 diphosphate. It catalyses the reaction a tRNA with a 3' CCA end + 2 CTP + ATP = a tRNA with a 3' CCACCA end + 3 diphosphate. Catalyzes the addition and repair of the essential 3'-terminal CCA sequence in tRNAs without using a nucleic acid template. Adds these three nucleotides in the order of C, C, and A to the tRNA nucleotide-73, using CTP and ATP as substrates and producing inorganic pyrophosphate. tRNA 3'-terminal CCA addition is required both for tRNA processing and repair. Also involved in tRNA surveillance by mediating tandem CCA addition to generate a CCACCA at the 3' terminus of unstable tRNAs. While stable tRNAs receive only 3'-terminal CCA, unstable tRNAs are marked with CCACCA and rapidly degraded. In Acidovorax sp. (strain JS42), this protein is Multifunctional CCA protein.